Here is a 388-residue protein sequence, read N- to C-terminus: Processive diacylglycerol beta-glucosyltransferase (388 aa).

It belongs to the glycosyltransferase 28 family. UgtP subfamily.

The protein localises to the cell membrane. The catalysed reaction is a 1,2-diacyl-3-O-(beta-D-glucopyranosyl)-sn-glycerol + UDP-alpha-D-glucose = a 1,2-diacyl-3-O-(beta-D-Glc-(1-&gt;6)-beta-D-Glc)-sn-glycerol + UDP + H(+). It carries out the reaction a 1,2-diacyl-3-O-(beta-D-Glc-(1-&gt;6)-beta-D-Glc)-sn-glycerol + UDP-alpha-D-glucose = a 1,2-diacyl-3-O-(beta-D-Glc-(1-&gt;6)-beta-D-Glc-(1-&gt;6)-beta-D-Glc)-sn-glycerol + UDP + H(+). The enzyme catalyses a 1,2-diacyl-sn-glycerol + UDP-alpha-D-glucose = a 1,2-diacyl-3-O-(beta-D-glucopyranosyl)-sn-glycerol + UDP + H(+). The protein operates within glycolipid metabolism; diglucosyl-diacylglycerol biosynthesis. Its function is as follows. Processive glucosyltransferase involved in the biosynthesis of both the bilayer- and non-bilayer-forming membrane glucolipids. Is able to successively transfer up to three glucosyl residues to diacylglycerol (DAG), thereby catalyzing the formation of beta-monoglucosyl-DAG (3-O-(beta-D-glucopyranosyl)-1,2-diacyl-sn-glycerol), beta-diglucosyl-DAG (3-O-(beta-D-glucopyranosyl-beta-(1-&gt;6)-D-glucopyranosyl)-1,2-diacyl-sn-glycerol) and beta-triglucosyl-DAG (3-O-(beta-D-glucopyranosyl-beta-(1-&gt;6)-D-glucopyranosyl-beta-(1-&gt;6)-D-glucopyranosyl)-1,2-diacyl-sn-glycerol). Beta-diglucosyl-DAG is the predominant glycolipid found in Bacillales and is also used as a membrane anchor for lipoteichoic acid (LTA). The polypeptide is Processive diacylglycerol beta-glucosyltransferase (Bacillus cereus (strain ZK / E33L)).